Here is a 550-residue protein sequence, read N- to C-terminus: Urocanate hydratase (550 aa).

NAD(+) is bound by residues 48-49 (GG), Gln126, 172-174 (GMG), Glu192, Arg197, 238-239 (NA), 259-263 (QTSAH), 268-269 (YL), and Tyr317. The active site involves Cys405. Gly487 is an NAD(+) binding site.

This sequence belongs to the urocanase family. NAD(+) is required as a cofactor.

It localises to the cytoplasm. The enzyme catalyses 4-imidazolone-5-propanoate = trans-urocanate + H2O. It participates in amino-acid degradation; L-histidine degradation into L-glutamate; N-formimidoyl-L-glutamate from L-histidine: step 2/3. In terms of biological role, catalyzes the conversion of urocanate to 4-imidazolone-5-propionate. This is Urocanate hydratase from Saccharopolyspora erythraea (strain ATCC 11635 / DSM 40517 / JCM 4748 / NBRC 13426 / NCIMB 8594 / NRRL 2338).